The chain runs to 549 residues: Oxygen-dependent choline dehydrogenase (549 aa).

4–33 (DFVIIGSGSAGSALAYRLSEDGKNSVLVIE) lines the FAD pocket. The active-site Proton acceptor is the H465.

The protein belongs to the GMC oxidoreductase family. It depends on FAD as a cofactor.

It catalyses the reaction choline + A = betaine aldehyde + AH2. It carries out the reaction betaine aldehyde + NAD(+) + H2O = glycine betaine + NADH + 2 H(+). Its pathway is amine and polyamine biosynthesis; betaine biosynthesis via choline pathway; betaine aldehyde from choline (cytochrome c reductase route): step 1/1. Its function is as follows. Involved in the biosynthesis of the osmoprotectant glycine betaine. Catalyzes the oxidation of choline to betaine aldehyde and betaine aldehyde to glycine betaine at the same rate. The polypeptide is Oxygen-dependent choline dehydrogenase (Rhizobium etli (strain CIAT 652)).